The chain runs to 99 residues: Translation initiation factor 1A (99 aa).

Residues 11 to 84 (RRVRTPRRGE…EKADIVWRYT (74 aa)) form the S1-like domain.

The protein belongs to the eIF-1A family.

In terms of biological role, seems to be required for maximal rate of protein biosynthesis. Enhances ribosome dissociation into subunits and stabilizes the binding of the initiator Met-tRNA(I) to 40 S ribosomal subunits. This is Translation initiation factor 1A (eIF1A) from Methanothermobacter thermautotrophicus (strain ATCC 29096 / DSM 1053 / JCM 10044 / NBRC 100330 / Delta H) (Methanobacterium thermoautotrophicum).